Reading from the N-terminus, the 340-residue chain is MKAAVVTKDHRVSIEEKRLRELKPGEALVKTEYCGVCHTDLHVKNADFGDVTGVTLGHEGIGRVIEVADNVDSLKVGDRVSIAWMYAACGNCEYCTTGRETLCRDVLNAGYTVDGAMAEEVIVDANYAVKVPENLDPAAASSITCAGVTTYKAVKVSGIEPGQWLGVFGVGGLGNLALQYAKNVMGAKVVAFDINDDKLNFAKELGADAIINSTNVDPIEEVNRLTNNKGLDATVITAVAKTPFNQAVDVVKAGARVVAVGLPVDKMDLDIPRLVLDGIEVVGSLVGTRQDLREAFQFAAENKVIPKVQLRQLSEINDIFDEMEKGTITGRMVIDMKSSH.

The Zn(2+) site is built by C37, H58, C89, C92, C95, C103, and C145.

The protein belongs to the zinc-containing alcohol dehydrogenase family. It depends on Zn(2+) as a cofactor.

It carries out the reaction a primary alcohol + NAD(+) = an aldehyde + NADH + H(+). The catalysed reaction is a secondary alcohol + NAD(+) = a ketone + NADH + H(+). The chain is Alcohol dehydrogenase (adh) from Staphylococcus epidermidis (strain ATCC 35984 / DSM 28319 / BCRC 17069 / CCUG 31568 / BM 3577 / RP62A).